Consider the following 356-residue polypeptide: Dual-specificity RNA methyltransferase RlmN (356 aa).

The active-site Proton acceptor is Glu87. A Radical SAM core domain is found at 106–339; the sequence is QEAKYTICVS…CTIRDSKGID (234 aa). A disulfide bridge links Cys113 with Cys344. [4Fe-4S] cluster-binding residues include Cys120, Cys124, and Cys127. Residues 170 to 171, Ser202, 225 to 227, and Asn301 each bind S-adenosyl-L-methionine; these read GE and SLH. Cys344 acts as the S-methylcysteine intermediate in catalysis.

This sequence belongs to the radical SAM superfamily. RlmN family. [4Fe-4S] cluster is required as a cofactor.

The protein resides in the cytoplasm. It carries out the reaction adenosine(2503) in 23S rRNA + 2 reduced [2Fe-2S]-[ferredoxin] + 2 S-adenosyl-L-methionine = 2-methyladenosine(2503) in 23S rRNA + 5'-deoxyadenosine + L-methionine + 2 oxidized [2Fe-2S]-[ferredoxin] + S-adenosyl-L-homocysteine. The enzyme catalyses adenosine(37) in tRNA + 2 reduced [2Fe-2S]-[ferredoxin] + 2 S-adenosyl-L-methionine = 2-methyladenosine(37) in tRNA + 5'-deoxyadenosine + L-methionine + 2 oxidized [2Fe-2S]-[ferredoxin] + S-adenosyl-L-homocysteine. In terms of biological role, specifically methylates position 2 of adenine 2503 in 23S rRNA and position 2 of adenine 37 in tRNAs. m2A2503 modification seems to play a crucial role in the proofreading step occurring at the peptidyl transferase center and thus would serve to optimize ribosomal fidelity. The protein is Dual-specificity RNA methyltransferase RlmN of Sulfurimonas denitrificans (strain ATCC 33889 / DSM 1251) (Thiomicrospira denitrificans (strain ATCC 33889 / DSM 1251)).